The chain runs to 305 residues: Dihydroorotate dehydrogenase B (NAD(+)), catalytic subunit (305 aa).

FMN-binding positions include Ser21 and 45 to 46; that span reads KA. Substrate-binding positions include Lys45 and 69–73; that span reads NAIGL. FMN contacts are provided by Asn99 and Asn127. Substrate is bound at residue Asn127. Residue Cys130 is the Nucleophile of the active site. 2 residues coordinate FMN: Lys165 and Ile191. Residue 192–193 participates in substrate binding; that stretch reads NT. FMN contacts are provided by residues Gly217, 243 to 244, and 265 to 266; these read GG and GT.

This sequence belongs to the dihydroorotate dehydrogenase family. Type 1 subfamily. In terms of assembly, heterotetramer of 2 PyrK and 2 PyrD type B subunits. Requires FMN as cofactor.

It localises to the cytoplasm. It catalyses the reaction (S)-dihydroorotate + NAD(+) = orotate + NADH + H(+). Its pathway is pyrimidine metabolism; UMP biosynthesis via de novo pathway; orotate from (S)-dihydroorotate (NAD(+) route): step 1/1. In terms of biological role, catalyzes the conversion of dihydroorotate to orotate with NAD(+) as electron acceptor. This chain is Dihydroorotate dehydrogenase B (NAD(+)), catalytic subunit (pyrD), found in Halalkalibacterium halodurans (strain ATCC BAA-125 / DSM 18197 / FERM 7344 / JCM 9153 / C-125) (Bacillus halodurans).